The sequence spans 262 residues: Small ribosomal subunit protein eS4B (262 aa).

An S4 RNA-binding domain is found at 42-105 (LPLIVFLRNR…GEHFRLVYDI (64 aa)). Ser223 bears the Phosphoserine mark.

It belongs to the eukaryotic ribosomal protein eS4 family. Component of the small ribosomal subunit (SSU). Mature yeast ribosomes consist of a small (40S) and a large (60S) subunit. The 40S small subunit contains 1 molecule of ribosomal RNA (18S rRNA) and at least 33 different proteins. The large 60S subunit contains 3 rRNA molecules (25S, 5.8S and 5S rRNA) and at least 46 different proteins.

Its subcellular location is the cytoplasm. It is found in the nucleus. It localises to the nucleolus. Component of the ribosome, a large ribonucleoprotein complex responsible for the synthesis of proteins in the cell. The small ribosomal subunit (SSU) binds messenger RNAs (mRNAs) and translates the encoded message by selecting cognate aminoacyl-transfer RNA (tRNA) molecules. The large subunit (LSU) contains the ribosomal catalytic site termed the peptidyl transferase center (PTC), which catalyzes the formation of peptide bonds, thereby polymerizing the amino acids delivered by tRNAs into a polypeptide chain. The nascent polypeptides leave the ribosome through a tunnel in the LSU and interact with protein factors that function in enzymatic processing, targeting, and the membrane insertion of nascent chains at the exit of the ribosomal tunnel. In Schizosaccharomyces pombe (strain 972 / ATCC 24843) (Fission yeast), this protein is Small ribosomal subunit protein eS4B (rps402).